A 122-amino-acid chain; its full sequence is Basic phospholipase A2 vipoxin B chain (122 aa).

Cystine bridges form between Cys-26/Cys-115, Cys-28/Cys-44, Cys-43/Cys-95, Cys-49/Cys-122, Cys-50/Cys-88, Cys-57/Cys-81, and Cys-75/Cys-86. Ca(2+) contacts are provided by Tyr-27, Gly-29, and Gly-31. His-47 is an active-site residue. Asp-48 lines the Ca(2+) pocket. Asp-89 is a catalytic residue.

It belongs to the phospholipase A2 family. Group II subfamily. D49 sub-subfamily. In terms of assembly, heterodimer of A (AC P04084) and B chains; non-covalently linked. The A chain (acidic) is non-toxic, and increases the toxicity of the B chain (basic). The A chain may act as factor stabilizing the complex structure and hence retaining its toxicity by preventing non-specific binding. Upon binding to the target membranes the A chain is postulated to dissociate. Ca(2+) is required as a cofactor. As to expression, expressed by the venom gland.

The protein localises to the secreted. The catalysed reaction is a 1,2-diacyl-sn-glycero-3-phosphocholine + H2O = a 1-acyl-sn-glycero-3-phosphocholine + a fatty acid + H(+). In terms of biological role, heterodimer: postsynaptic neurotoxin. Monomer: snake venom phospholipase A2 (PLA2) that shows hemolytic activity and inhibition of platelet aggregation. The hemolytic activity occurs only in presence of fatty acids (unsaturated fatty acids facilitate induce a strong hemolytic activity, whereas saturated fatty acids induce a slight activity). The inhibition of platelet aggregation is almost maximal when aggregation is induced by collagen, and arachidonic acid, whereas it is only of 30% when the aggregation is induced by ADP. PLA2 catalyzes the calcium-dependent hydrolysis of the 2-acyl groups in 3-sn-phosphoglycerides. In Vipera ammodytes meridionalis (Eastern sand viper), this protein is Basic phospholipase A2 vipoxin B chain.